We begin with the raw amino-acid sequence, 239 residues long: Heptaprenylglyceryl phosphate synthase (239 aa).

Lysine 12 is a sn-glycerol 1-phosphate binding site. Aspartate 14 and threonine 40 together coordinate Mg(2+). Sn-glycerol 1-phosphate-binding positions include 159 to 164 (YLEYSG), glycine 189, and 209 to 210 (GN).

The protein belongs to the GGGP/HepGP synthase family. Group I subfamily. As to quaternary structure, homodimer. The cofactor is Mg(2+).

It catalyses the reaction sn-glycerol 1-phosphate + all-trans-heptaprenyl diphosphate = 3-heptaprenyl-sn-glycero-1-phosphate + diphosphate. It participates in membrane lipid metabolism; glycerophospholipid metabolism. Functionally, prenyltransferase that catalyzes in vivo the transfer of the heptaprenyl moiety of heptaprenyl pyrophosphate (HepPP; 35 carbon atoms) to the C3 hydroxyl of sn-glycerol-1-phosphate (G1P), producing heptaprenylglyceryl phosphate (HepGP). This reaction is an ether-bond-formation step in the biosynthesis of archaea-type G1P-based membrane lipids found in Bacillales. To a much lesser extent, is also able to use geranylgeranyl diphosphate (GGPP; C20) as the prenyl donor. The sequence is that of Heptaprenylglyceryl phosphate synthase from Geobacillus kaustophilus (strain HTA426).